The chain runs to 94 residues: Co-chaperonin GroES (94 aa).

This sequence belongs to the GroES chaperonin family. In terms of assembly, heptamer of 7 subunits arranged in a ring. Interacts with the chaperonin GroEL.

It localises to the cytoplasm. Together with the chaperonin GroEL, plays an essential role in assisting protein folding. The GroEL-GroES system forms a nano-cage that allows encapsulation of the non-native substrate proteins and provides a physical environment optimized to promote and accelerate protein folding. GroES binds to the apical surface of the GroEL ring, thereby capping the opening of the GroEL channel. The protein is Co-chaperonin GroES of Streptococcus pneumoniae (strain 70585).